Here is a 544-residue protein sequence, read N- to C-terminus: Chaperonin GroEL 2 (544 aa).

Residues 29–32 (TLGP), 86–90 (DGTTT), glycine 413, 479–481 (NAA), and aspartate 495 contribute to the ATP site.

The protein belongs to the chaperonin (HSP60) family. Forms a cylinder of 14 subunits composed of two heptameric rings stacked back-to-back. Interacts with the co-chaperonin GroES.

It is found in the cytoplasm. It carries out the reaction ATP + H2O + a folded polypeptide = ADP + phosphate + an unfolded polypeptide.. In terms of biological role, together with its co-chaperonin GroES, plays an essential role in assisting protein folding. The GroEL-GroES system forms a nano-cage that allows encapsulation of the non-native substrate proteins and provides a physical environment optimized to promote and accelerate protein folding. This chain is Chaperonin GroEL 2, found in Trichodesmium erythraeum (strain IMS101).